Here is a 614-residue protein sequence, read N- to C-terminus: Protein YehQ (614 aa).

2 consecutive SWIM-type zinc fingers follow at residues 55 to 89 and 151 to 185; these read VRTQ…LSYQ and SDVR…QAFV.

The sequence is that of Protein YehQ (yehQ) from Escherichia coli (strain K12).